We begin with the raw amino-acid sequence, 175 residues long: Ferritin light chain (175 aa).

In terms of domain architecture, Ferritin-like diiron spans 7-156; sequence QNYSPEVEAA…DHLTNIRRLS (150 aa). E54, E57, E58, E61, and E64 together coordinate Fe cation.

Belongs to the ferritin family. As to quaternary structure, oligomer of 24 subunits. There are two types of subunits: L (light) chain and H (heavy) chain. The major chain can be light or heavy, depending on the species and tissue type. The functional molecule forms a roughly spherical shell with a diameter of 12 nm and contains a central cavity into which the insoluble mineral iron core is deposited. Interacts with NCOA4.

The protein localises to the cytoplasmic vesicle. It localises to the autophagosome. Its subcellular location is the cytoplasm. The protein resides in the autolysosome. In terms of biological role, stores iron in a soluble, non-toxic, readily available form. Important for iron homeostasis. Iron is taken up in the ferrous form and deposited as ferric hydroxides after oxidation. Also plays a role in delivery of iron to cells. Mediates iron uptake in capsule cells of the developing kidney. Delivery to lysosomes by the cargo receptor NCOA4 for autophagic degradation and release or iron. The sequence is that of Ferritin light chain (FTL) from Oryctolagus cuniculus (Rabbit).